The chain runs to 619 residues: Translation initiation factor eIF2B subunit delta (619 aa).

Positions 21-32 (GDYLDSKQEGKP) are enriched in basic and acidic residues. The interval 21–251 (GDYLDSKQEG…PKQRGKITKK (231 aa)) is disordered. The segment covering 42 to 56 (TNTSPVSIPTIISPP) has biased composition (low complexity). Polar residues predominate over residues 57-84 (LGSNNSNYGKSPKSSYDNKQTSPLLSAS). Over residues 85–98 (NNRKNNNNNNNNNN) the composition is skewed to low complexity. Over residues 99-125 (ATSPKDSSIIGKNNVNSDLSKVSSSLN) the composition is skewed to polar residues. Positions 136–199 (STSSTPTSTP…KQQSKQQATQ (64 aa)) are enriched in low complexity. Residues 200–244 (QDKKDKEQQQQQQDKQDKESNEIKGSKEVAKDGQHGVKQFDDPKQ) show a composition bias toward basic and acidic residues.

It belongs to the eIF-2B alpha/beta/delta subunits family. In terms of assembly, component of the translation initiation factor 2B (eIF2B) complex which is a heterodecamer of two sets of five different subunits: alpha, beta, gamma, delta and epsilon. Subunits alpha, beta and delta comprise a regulatory subcomplex and subunits epsilon and gamma comprise a catalytic subcomplex. Within the complex, the hexameric regulatory complex resides at the center, with the two heterodimeric catalytic subcomplexes bound on opposite sides.

The protein localises to the cytoplasm. It localises to the cytosol. In terms of biological role, acts as a component of the translation initiation factor 2B (eIF2B) complex, which catalyzes the exchange of GDP for GTP on eukaryotic initiation factor 2 (eIF2) gamma subunit. Its guanine nucleotide exchange factor activity is repressed when bound to eIF2 complex phosphorylated on the alpha subunit, thereby limiting the amount of methionyl-initiator methionine tRNA available to the ribosome and consequently global translation is repressed. The protein is Translation initiation factor eIF2B subunit delta (eif2b4) of Dictyostelium discoideum (Social amoeba).